Reading from the N-terminus, the 182-residue chain is UPF0397 protein BCG9842_B2659 (182 aa).

5 helical membrane-spanning segments follow: residues 9–29 (VVAI…GFSI), 40–60 (AILT…IGLI), 71–91 (WGIW…MGLI), 114–134 (ITGL…DIIV), and 142–162 (IVIQ…VLGL).

The protein belongs to the UPF0397 family.

The protein resides in the cell membrane. The polypeptide is UPF0397 protein BCG9842_B2659 (Bacillus cereus (strain G9842)).